A 467-amino-acid chain; its full sequence is 3-isopropylmalate dehydratase large subunit (467 aa).

Residues Cys347, Cys407, and Cys410 each contribute to the [4Fe-4S] cluster site.

Belongs to the aconitase/IPM isomerase family. LeuC type 1 subfamily. As to quaternary structure, heterodimer of LeuC and LeuD. [4Fe-4S] cluster serves as cofactor.

The enzyme catalyses (2R,3S)-3-isopropylmalate = (2S)-2-isopropylmalate. The protein operates within amino-acid biosynthesis; L-leucine biosynthesis; L-leucine from 3-methyl-2-oxobutanoate: step 2/4. Catalyzes the isomerization between 2-isopropylmalate and 3-isopropylmalate, via the formation of 2-isopropylmaleate. The protein is 3-isopropylmalate dehydratase large subunit of Picosynechococcus sp. (strain ATCC 27264 / PCC 7002 / PR-6) (Agmenellum quadruplicatum).